A 203-amino-acid polypeptide reads, in one-letter code: Endo-type membrane-bound lytic murein transglycosylase A (203 aa).

A signal peptide spans 1–15 (MKLRWFAFLIVLLAG). Cysteine 16 carries the N-palmitoyl cysteine lipid modification. Cysteine 16 is lipidated: S-diacylglycerol cysteine.

Belongs to the transglycosylase Slt family.

The protein resides in the cell outer membrane. The enzyme catalyses Endolytic cleavage of the (1-&gt;4)-beta-glycosidic linkage between N-acetylmuramic acid (MurNAc) and N-acetylglucosamine (GlcNAc) residues in peptidoglycan with concomitant formation of a 1,6-anhydrobond in the MurNAc residue.. In terms of biological role, murein-degrading enzyme. May play a role in recycling of muropeptides during cell elongation and/or cell division. Preferentially cleaves at a distance of more than two disaccharide units from the ends of the glycan chain. The polypeptide is Endo-type membrane-bound lytic murein transglycosylase A (Escherichia coli O1:K1 / APEC).